The chain runs to 432 residues: Alpha-enolase (432 aa).

Ser40 provides a ligand contact to Mg(2+). 2 residues coordinate substrate: His158 and Glu167. Glu210 serves as the catalytic Proton donor. Asp245, Glu293, and Asp318 together coordinate Mg(2+). Substrate contacts are provided by Glu293 and Asp318. Lys343 serves as the catalytic Proton acceptor. Substrate contacts are provided by residues 370 to 373 and Lys394; that span reads SHRS.

This sequence belongs to the enolase family. In terms of assembly, dimer. Mg(2+) serves as cofactor.

Its subcellular location is the cytoplasm. The enzyme catalyses (2R)-2-phosphoglycerate = phosphoenolpyruvate + H2O. It participates in carbohydrate degradation; glycolysis; pyruvate from D-glyceraldehyde 3-phosphate: step 4/5. In terms of biological role, multifunctional enzyme that, as well as its role in glycolysis, plays a part in various processes such as growth control, hypoxia tolerance and allergic responses. The sequence is that of Alpha-enolase from Thunnus albacares (Yellowfin tuna).